Reading from the N-terminus, the 1052-residue chain is MKLVNIWLLLLVVLLCGKKHLGDRLGKKAFEKAPCPSCSHLTLKVEFSSTVVEYEYIVAFNGYFTAKARNSFISSALKSSEVDNWRIIPRNNPSSDYPSDFEVIQIKEKQKAGLLTLEDHPNIKRVTPQRKVFRSLKFAESDPIVPCNETRWSQKWQSSRPLKRASLSLGSGFWHATGRHSSRRLLRAIPRQVAQTLQADVLWQMGYTGANVRVAVFDTGLSEKHPHFKNVKERTNWTNERTLDDGLGHGTFVAGVIASMRECQGFAPDAELHIFRVFTNNQVSYTSWFLDAFNYAILKKIDVLNLSIGGPDFMDHPFVDKVWELTANNVIMVSAIGNDGPLYGTLNNPADQMDVIGVGGIDFEDNIARFSSRGMTTWELPGGYGRVKPDIVTYGAGVRGSGVKGGCRALSGTSVASPVVAGAVTLLVSTVQKRELVNPASVKQALIASARRLPGVNMFEQGHGKLDLLRAYQILSSYKPQASLSPSYIDLTECPYMWPYCSQPIYYGGMPTIVNVTILNGMGVTGRIVDKPEWRPYLPQNGDNIEVAFSYSSVLWPWSGYLAISISVTKKAASWEGIAQGHIMITVASPAETELKNGAEHTSTVKLPIKVKIIPTPPRSKRVLWDQYHNLRYPPGYFPRDNLRMKNDPLDWNGDHVHTNFRDMYQHLRSMGYFVEVLGAPFTCFDATQYGTLLMVDSEEEYFPEEIAKLRRDVDNGLSLVVFSDWYNTSVMRKVKFYDENTRQWWMPDTGGANVPALNELLSVWNMGFSDGLYEGEFALANHDMYYASGCSIARFPEDGVVITQTFKDQGLEVLKQETAVVDNVPILGLYQIPAEGGGRIVLYGDSNCLDDSHRQKDCFWLLDALLQYTSYGVTPPSLSHSGNRQRPPSGAGLAPPERMEGNHLHRYSKVLEAHLGDPKPRPLPACPHLSWAKPQPLNETAPSNLWKHQKLLSIDLDKVVLPNFRSNRPQVRPLSPGESGAWDIPGGIMPGRYNQEVGQTIPVFAFLGAMVALAFFVVQISKAKSRPKRRRPRAKRPQLAQQAHPARTPSV.

Positions 1 to 17 (MKLVNIWLLLLVVLLCG) are cleaved as a signal peptide. Residues 18–186 (KKHLGDRLGK…TGRHSSRRLL (169 aa)) constitute a propeptide that is removed on maturation. The N-linked (GlcNAc...) asparagine glycan is linked to N148. At S168 the chain carries Phosphoserine. The Lumenal segment spans residues 187–999 (RAIPRQVAQT…MPGRYNQEVG (813 aa)). A Peptidase S8 domain is found at 190–472 (PRQVAQTLQA…HGKLDLLRAY (283 aa)). The active-site Charge relay system is D218. N-linked (GlcNAc...) asparagine glycosylation is present at N236. H249 functions as the Charge relay system in the catalytic mechanism. N305 carries N-linked (GlcNAc...) asparagine glycosylation. S414 acts as the Charge relay system in catalysis. N515 and N728 each carry an N-linked (GlcNAc...) asparagine glycan. The segment covering 877–887 (PSLSHSGNRQR) has biased composition (polar residues). Residues 877–900 (PSLSHSGNRQRPPSGAGLAPPERM) form a disordered region. An N-linked (GlcNAc...) asparagine glycan is attached at N939. Residues 1000-1022 (QTIPVFAFLGAMVALAFFVVQIS) form a helical membrane-spanning segment. At 1023–1052 (KAKSRPKRRRPRAKRPQLAQQAHPARTPSV) the chain is on the cytoplasmic side. Basic residues predominate over residues 1026 to 1037 (SRPKRRRPRAKR). Positions 1026 to 1052 (SRPKRRRPRAKRPQLAQQAHPARTPSV) are disordered.

Belongs to the peptidase S8 family. In terms of assembly, interacts with LYSET; this interaction bridges GNPTAB to MBTPS1. The cofactor is Ca(2+). The 148 kDa zymogen is processed progressively into two membrane-bound 120 and 106 kDa forms in the endoplasmic reticulum, and late into a secreted 98 kDa form. The propeptide is autocatalytically removed through an intramolecular cleavage after Leu-186. Further cleavage generates 14, 10, and 8 kDa intermediates. Widely expressed. In adult rat, highly expressed in anterior pituitary, thyroid and adrenal glands and in liver. In 2-day old rat, detected in developing skin, striated muscles, cardiac muscles, bones, teeth and internal organs. Highly expressed in retina, cerebellum, pituitary, submaxillary, thyroid and adrenal glands, molars, thymus, kidney and intestine.

It localises to the endoplasmic reticulum membrane. The protein resides in the golgi apparatus membrane. It carries out the reaction Processes precursors containing basic and hydrophobic/aliphatic residues at P4 and P2, respectively, with a relatively relaxed acceptance of amino acids at P1 and P3.. Inhibited by divalent copper and zinc ions, but not by nickel or cobalt. Inhibited by its prosegment, but not smaller fragments. Inhibited by 4-(2-aminoethyl)benzenesulfonyl fluoride (AEBSF), a serine protease inhibitor. Its function is as follows. Serine protease that cleaves after hydrophobic or small residues, provided that Arg or Lys is in position P4: known substrates include SREBF1/SREBP1, SREBF2/SREBP2, BDNF, GNPTAB, ATF6, ATF6B and FAM20C. Cleaves substrates after Arg-Ser-Val-Leu (SREBP2), Arg-His-Leu-Leu (ATF6), Arg-Gly-Leu-Thr (BDNF) and its own propeptide after Arg-Arg-Leu-Leu. Catalyzes the first step in the proteolytic activation of the sterol regulatory element-binding proteins (SREBPs) SREBF1/SREBP1 and SREBF2/SREBP2. Also mediates the first step in the proteolytic activation of the cyclic AMP-dependent transcription factor ATF-6 (ATF6 and ATF6B). Mediates the protein cleavage of GNPTAB into subunit alpha and beta, thereby participating in biogenesis of lysosomes. Cleaves the propeptide from FAM20C which is required for FAM20C secretion from the Golgi apparatus membrane and for enhancement of FAM20C kinase activity, promoting osteoblast differentiation and biomineralization. Involved in the regulation of M6P-dependent Golgi-to-lysosome trafficking of lysosomal enzymes. It is required for the activation of CREB3L2/BBF2H7, a transcriptional activator of MIA3/TANGO and other genes controlling mega vesicle formation. Therefore, it plays a key role in the regulation of mega vesicle-mediated collagen trafficking. In astrocytes and osteoblasts, upon DNA damage and ER stress, mediates the first step of the regulated intramembrane proteolytic activation of the transcription factor CREB3L1, leading to the inhibition of cell-cycle progression. The polypeptide is Membrane-bound transcription factor site-1 protease (Mbtps1) (Rattus norvegicus (Rat)).